The primary structure comprises 279 residues: Orotidine 5'-phosphate decarboxylase (279 aa).

Residues aspartate 8, lysine 30, 58 to 67, threonine 117, arginine 177, glutamine 186, glycine 206, and arginine 207 contribute to the substrate site; that span reads DLKIHDIPNT. Lysine 60 serves as the catalytic Proton donor.

This sequence belongs to the OMP decarboxylase family. Type 1 subfamily. As to quaternary structure, homodimer.

The enzyme catalyses orotidine 5'-phosphate + H(+) = UMP + CO2. It participates in pyrimidine metabolism; UMP biosynthesis via de novo pathway; UMP from orotate: step 2/2. Catalyzes the decarboxylation of orotidine 5'-monophosphate (OMP) to uridine 5'-monophosphate (UMP). This chain is Orotidine 5'-phosphate decarboxylase, found in Campylobacter jejuni (strain RM1221).